An 810-amino-acid chain; its full sequence is Phenylalanine--tRNA ligase beta subunit (810 aa).

In terms of domain architecture, tRNA-binding spans 39-154 (APPTEKIVVG…EGTPVGQDIR (116 aa)). The B5 domain occupies 405-480 (PQRAPVSMRA…RIYGFEKIPA (76 aa)). 4 residues coordinate Mg(2+): Asp-458, Asp-464, Glu-467, and Glu-468. An FDX-ACB domain is found at 707–809 (SKFPPVRRDI…MARVYGARLR (103 aa)).

Belongs to the phenylalanyl-tRNA synthetase beta subunit family. Type 1 subfamily. In terms of assembly, tetramer of two alpha and two beta subunits. The cofactor is Mg(2+).

The protein resides in the cytoplasm. It carries out the reaction tRNA(Phe) + L-phenylalanine + ATP = L-phenylalanyl-tRNA(Phe) + AMP + diphosphate + H(+). The protein is Phenylalanine--tRNA ligase beta subunit of Burkholderia pseudomallei (strain 1710b).